A 252-amino-acid polypeptide reads, in one-letter code: GTP cyclohydrolase 1 type 2 homolog (252 aa).

Positions 65, 66, 103, 220, and 224 each coordinate a divalent metal cation.

This sequence belongs to the GTP cyclohydrolase I type 2/NIF3 family. In terms of assembly, homohexamer.

In Pseudomonas aeruginosa (strain ATCC 15692 / DSM 22644 / CIP 104116 / JCM 14847 / LMG 12228 / 1C / PRS 101 / PAO1), this protein is GTP cyclohydrolase 1 type 2 homolog.